A 407-amino-acid chain; its full sequence is 3-oxoacyl-[acyl-carrier-protein] synthase 1 (407 aa).

A Ketosynthase family 3 (KS3) domain is found at Met1–Lys406. Active-site for beta-ketoacyl synthase activity residues include Cys164, His300, and His336.

This sequence belongs to the thiolase-like superfamily. Beta-ketoacyl-ACP synthases family. Homodimer.

It localises to the cytoplasm. It catalyses the reaction a fatty acyl-[ACP] + malonyl-[ACP] + H(+) = a 3-oxoacyl-[ACP] + holo-[ACP] + CO2. The enzyme catalyses (3Z)-decenoyl-[ACP] + malonyl-[ACP] + H(+) = 3-oxo-(5Z)-dodecenoyl-[ACP] + holo-[ACP] + CO2. It participates in lipid metabolism; fatty acid biosynthesis. In terms of biological role, involved in the type II fatty acid elongation cycle. Catalyzes the elongation of a wide range of acyl-ACP by the addition of two carbons from malonyl-ACP to an acyl acceptor. Can also use unsaturated fatty acids. Catalyzes a key reaction in unsaturated fatty acid (UFA) synthesis, the elongation of the cis-3-decenoyl-ACP produced by FabA. This is 3-oxoacyl-[acyl-carrier-protein] synthase 1 (fabB) from Buchnera aphidicola subsp. Schizaphis graminum (strain Sg).